The sequence spans 567 residues: Proline--tRNA ligase (567 aa).

It belongs to the class-II aminoacyl-tRNA synthetase family. ProS type 1 subfamily. Homodimer.

It is found in the cytoplasm. The enzyme catalyses tRNA(Pro) + L-proline + ATP = L-prolyl-tRNA(Pro) + AMP + diphosphate. Catalyzes the attachment of proline to tRNA(Pro) in a two-step reaction: proline is first activated by ATP to form Pro-AMP and then transferred to the acceptor end of tRNA(Pro). As ProRS can inadvertently accommodate and process non-cognate amino acids such as alanine and cysteine, to avoid such errors it has two additional distinct editing activities against alanine. One activity is designated as 'pretransfer' editing and involves the tRNA(Pro)-independent hydrolysis of activated Ala-AMP. The other activity is designated 'posttransfer' editing and involves deacylation of mischarged Ala-tRNA(Pro). The misacylated Cys-tRNA(Pro) is not edited by ProRS. The chain is Proline--tRNA ligase from Geobacillus thermodenitrificans (strain NG80-2).